The chain runs to 455 residues: Glutamyl-tRNA reductase (455 aa).

Residues 49–52, Ser-109, 114–116, and Gln-120 contribute to the substrate site; these read TCNR and EAQ. Residue Cys-50 is the Nucleophile of the active site. Residue 190 to 195 coordinates NADP(+); the sequence is GAGAMG.

Belongs to the glutamyl-tRNA reductase family. As to quaternary structure, homodimer.

The catalysed reaction is (S)-4-amino-5-oxopentanoate + tRNA(Glu) + NADP(+) = L-glutamyl-tRNA(Glu) + NADPH + H(+). The protein operates within porphyrin-containing compound metabolism; protoporphyrin-IX biosynthesis; 5-aminolevulinate from L-glutamyl-tRNA(Glu): step 1/2. Its function is as follows. Catalyzes the NADPH-dependent reduction of glutamyl-tRNA(Glu) to glutamate 1-semialdehyde (GSA). The sequence is that of Glutamyl-tRNA reductase from Salinispora arenicola (strain CNS-205).